Here is a 469-residue protein sequence, read N- to C-terminus: Keratin, type I cytoskeletal 26 (469 aa).

The tract at residues Met-1–Asn-82 is head. The interval Glu-83–Trp-118 is coil 1A. In terms of domain architecture, IF rod spans Glu-83–Ser-398. A linker 1 region spans residues Tyr-119–Val-140. Positions Thr-141 to Met-232 are coil 1B. The interval Gln-233–Leu-255 is linker 12. The tract at residues Leu-256 to Glu-394 is coil 2. The tail stretch occupies residues Gly-395–Ser-465. Disordered regions lie at residues Ser-398 to Lys-421 and Lys-450 to Gln-469. Residues Ser-405–Lys-421 are compositionally biased toward basic and acidic residues.

The protein belongs to the intermediate filament family. As to quaternary structure, heterotetramer of two type I and two type II keratins.

This Bos taurus (Bovine) protein is Keratin, type I cytoskeletal 26.